The chain runs to 414 residues: Transforming growth factor beta-2 proprotein (414 aa).

Positions 1–20 (MHYCVLSAFLLLHLVTVALS) are cleaved as a signal peptide. N-linked (GlcNAc...) asparagine glycans are attached at residues N72, N140, and N241. Disulfide bonds link C309–C318, C317–C380, C346–C411, and C350–C413.

Belongs to the TGF-beta family. In terms of assembly, interacts with the serine proteases, HTRA1 and HTRA3. Interacts with ASPN. Interacts with MFAP5. As to quaternary structure, interacts with Transforming growth factor beta-2 (TGF-beta-2) chain; interaction is non-covalent and maintains (TGF-beta-2) in a latent state. Interacts with LRRC32/GARP; leading to regulate activation of TGF-beta-2. Interacts with NREP; the interaction results in a decrease in TGFB2 autoinduction. Transforming growth factor beta-2: Homodimer; disulfide-linked. Transforming growth factor beta-2: Interacts with TGF-beta receptors (TGFBR1 and TGFBR2), leading to signal transduction. Post-translationally, the precursor proprotein is cleaved in the Golgi apparatus to form Transforming growth factor beta-2 (TGF-beta-2) and Latency-associated peptide (LAP) chains, which remain non-covalently linked, rendering TGF-beta-2 inactive.

Its subcellular location is the secreted. The protein resides in the extracellular space. The protein localises to the extracellular matrix. Its function is as follows. Precursor of the Latency-associated peptide (LAP) and Transforming growth factor beta-2 (TGF-beta-2) chains, which constitute the regulatory and active subunit of TGF-beta-2, respectively. Functionally, required to maintain the Transforming growth factor beta-2 (TGF-beta-2) chain in a latent state during storage in extracellular matrix. Associates non-covalently with TGF-beta-2 and regulates its activation via interaction with 'milieu molecules', such as LTBP1 and LRRC32/GARP, that control activation of TGF-beta-2. Multifunctional protein that regulates various processes such as angiogenesis and heart development. Activation into mature form follows different steps: following cleavage of the proprotein in the Golgi apparatus, Latency-associated peptide (LAP) and Transforming growth factor beta-2 (TGF-beta-2) chains remain non-covalently linked rendering TGF-beta-2 inactive during storage in extracellular matrix. At the same time, LAP chain interacts with 'milieu molecules', such as LTBP1 and LRRC32/GARP, that control activation of TGF-beta-2 and maintain it in a latent state during storage in extracellular milieus. Once activated following release of LAP, TGF-beta-2 acts by binding to TGF-beta receptors (TGFBR1 and TGFBR2), which transduce signal. The sequence is that of Transforming growth factor beta-2 proprotein (TGFB2) from Bos taurus (Bovine).